The sequence spans 928 residues: MDGFAGSLDDSVSAASTSDVQDRLSALELRVQQQEDEITVLKAALADVLRRLAISEDQVATVRKAVPSKGPATMREALSMSCITNGGAGTRKPSHITSVAKKDTLSSAAKSVKRSSTIEKSHNSWDASEESRNKLMRAASTSKLTSKVAKATDKHKDIVISPEGEYIKMFMRGRPITMFIPSDVENYDDIRTELPPEKLKLEWVFGYRGRDCRANVYLLPTGEIVYFIASVVVLFNYEERTQRHYLGHTDCVKCIAVHPDKIRIATGQIAGVDKDGRPLQPHVRVWDSVSLSTLQVIGLGTFERGVGCLAFSKADSGVHLSVIDDSNEHMLTVWDWQKKSKIAEIKTTNEVVLTVEFHPTDACTIVTCGKSHIFFWTWSGNSLARKQGIFGKYEKPKFVQCLAFLANGDVLAGDSGGVMLIWSKTTVESTASKGAKVLGVYQISRQIKAHDGSVFTLCQMRNGMLLTGGGKDRKVIMWDHDLNPEREIEVPDQYGTIRAVAEGKGDQFLIGTSRNFILRGTFNDGFQVEVQGHTDELWGLATHPFKDLLLTCAQDKQVCLWNSVDHSLEWTRVLDEPGHCADFHPTGTVVAIGTHSGRWFVLDAETRDLVSIHTDGNEQLSVMRYSVDGALLAVGSHDNFIYLYNVSENGRKYSRYGKCTGHSSYITHLDWSPDNQYIMSNSGDYEILYWDIPSGCKLIRNRSDCKDINWATYTCVLGFQVFGVWPEGSDGTDINALVRSHNRKVIALADDFCKVHLFQYPCSKPKAPSHKYSAHSSHVTNVSFTHKDSHLISTGGKDMSIMQWRLIEKVSHSQNDNIVESSSAVNSPVVTEKPLQPNTPTNLPQAVNEVPKEDDKTPAESPVPAEDALEQPEELNEVQSEKCSSQPEGANGQEPSNEVSEDPTDSAAINNTPEDAQDENQDDSSPLS.

Residues 1-189 form a microtubule-binding region; that stretch reads MDGFAGSLDD…IPSDVENYDD (189 aa). Residues 14–63 are a coiled coil; the sequence is AASTSDVQDRLSALELRVQQQEDEITVLKAALADVLRRLAISEDQVATVR. Residues 107–131 form a disordered region; it reads SAAKSVKRSSTIEKSHNSWDASEES. Over residues 116–131 the composition is skewed to basic and acidic residues; that stretch reads STIEKSHNSWDASEES. WD repeat units follow at residues 199–237, 241–288, 296–336, 343–378, 385–424, 442–480, 485–521, 524–563, 567–604, 610–646, 653–692, 702–760, and 767–806; these read LKLE…LFNY, TQRH…VWDS, VIGL…VWDW, AEIK…FWTW, RKQG…IWSK, QISR…MWDH, EREI…LRGT, DGFQ…LWNS, SLEW…VLDA, VSIH…LYNV, YSRY…YWDI, RSDC…LFQY, and APSH…QWRL. Residues 821–928 form a disordered region; that stretch reads SSSAVNSPVV…ENQDDSSPLS (108 aa). Residues 836–845 are compositionally biased toward polar residues; that stretch reads QPNTPTNLPQ. Over residues 867-876 the composition is skewed to acidic residues; it reads DALEQPEELN. Polar residues predominate over residues 877–898; sequence EVQSEKCSSQPEGANGQEPSNE.

The protein belongs to the WD repeat EMAP family. Homotrimer; self-association is mediated by the N-terminal coiled coil.

The protein localises to the cytoplasm. The protein resides in the cytoskeleton. Its subcellular location is the spindle. It is found in the microtubule organizing center. It localises to the midbody. Functionally, essential for the formation and stability of microtubules (MTs). Required for the organization of the mitotic spindle and for the proper attachment of kinetochores to MTs. Promotes the recruitment of NUDC to the mitotic spindle for mitotic progression. This chain is Echinoderm microtubule-associated protein-like 4 (eml4), found in Xenopus tropicalis (Western clawed frog).